Here is a 125-residue protein sequence, read N- to C-terminus: Large ribosomal subunit protein bL12 (125 aa).

This sequence belongs to the bacterial ribosomal protein bL12 family. Homodimer. Part of the ribosomal stalk of the 50S ribosomal subunit. Forms a multimeric L10(L12)X complex, where L10 forms an elongated spine to which 2 to 4 L12 dimers bind in a sequential fashion. Binds GTP-bound translation factors.

Forms part of the ribosomal stalk which helps the ribosome interact with GTP-bound translation factors. Is thus essential for accurate translation. In Sphingopyxis alaskensis (strain DSM 13593 / LMG 18877 / RB2256) (Sphingomonas alaskensis), this protein is Large ribosomal subunit protein bL12.